The sequence spans 828 residues: Periplasmic nitrate reductase (828 aa).

The segment at residues 1 to 31 is a signal peptide (tat-type signal); it reads MKLSRRSFMKANAVAAAAAAAGLSVPGVARA. The 4Fe-4S Mo/W bis-MGD-type domain maps to 39-95; that stretch reads IKWDKAPCRFCGTGCGVLVGTQQGRVVACQGDPDAPVNRGLNCIKGYFLPKIMYGKD. [4Fe-4S] cluster-binding residues include cysteine 46, cysteine 49, cysteine 53, and cysteine 81. Mo-bis(molybdopterin guanine dinucleotide) contacts are provided by residues lysine 83, glutamine 150, asparagine 175, cysteine 179, 212-219, 243-247, 262-264, methionine 372, glutamine 376, asparagine 482, 508-509, lysine 531, aspartate 558, and 718-727; these read WGSNMAEM, STFQH, QSD, SD, and TGRVLEHWHT. Residue phenylalanine 794 coordinates substrate. 2 residues coordinate Mo-bis(molybdopterin guanine dinucleotide): asparagine 802 and lysine 819.

The protein belongs to the prokaryotic molybdopterin-containing oxidoreductase family. NasA/NapA/NarB subfamily. As to quaternary structure, component of the periplasmic nitrate reductase NapAB complex composed of NapA and NapB. [4Fe-4S] cluster is required as a cofactor. Requires Mo-bis(molybdopterin guanine dinucleotide) as cofactor. Predicted to be exported by the Tat system. The position of the signal peptide cleavage has not been experimentally proven.

It is found in the periplasm. It carries out the reaction 2 Fe(II)-[cytochrome] + nitrate + 2 H(+) = 2 Fe(III)-[cytochrome] + nitrite + H2O. Functionally, catalytic subunit of the periplasmic nitrate reductase complex NapAB. Receives electrons from NapB and catalyzes the reduction of nitrate to nitrite. This is Periplasmic nitrate reductase from Salmonella dublin (strain CT_02021853).